Consider the following 402-residue polypeptide: Dihydrolipoyllysine-residue acetyltransferase component of pyruvate dehydrogenase complex (402 aa).

A Lipoyl-binding domain is found at 1 to 69 (MPDIGLEEVE…KTSSIIMIFK (69 aa)). An N6-lipoyllysine modification is found at Lys-35. Residues 109–146 (HATPVVRRLARHLNVDLKNITPSGPKNRILKEDIELYI) form the Peripheral subunit-binding (PSBD) domain. Residue His-375 is part of the active site.

It belongs to the 2-oxoacid dehydrogenase family. In terms of assembly, forms a 24-polypeptide structural core with octahedral symmetry. The cofactor is (R)-lipoate.

It catalyses the reaction N(6)-[(R)-dihydrolipoyl]-L-lysyl-[protein] + acetyl-CoA = N(6)-[(R)-S(8)-acetyldihydrolipoyl]-L-lysyl-[protein] + CoA. Its function is as follows. The pyruvate dehydrogenase complex catalyzes the overall conversion of pyruvate to acetyl-CoA and CO(2). It contains multiple copies of three enzymatic components: pyruvate dehydrogenase (E1), dihydrolipoamide acetyltransferase (E2) and lipoamide dehydrogenase (E3). This is Dihydrolipoyllysine-residue acetyltransferase component of pyruvate dehydrogenase complex (aceF) from Buchnera aphidicola subsp. Schizaphis graminum (strain Sg).